Here is a 403-residue protein sequence, read N- to C-terminus: S-adenosylmethionine synthase (403 aa).

Position 17 (H17) interacts with ATP. Position 19 (D19) interacts with Mg(2+). E45 serves as a coordination point for K(+). L-methionine-binding residues include E58 and Q104. The interval Q104 to T114 is flexible loop. ATP is bound by residues D179 to K181, K250 to F251, D259, R265 to K266, A282, and K286. D259 lines the L-methionine pocket. K290 contacts L-methionine.

This sequence belongs to the AdoMet synthase family. In terms of assembly, homotetramer; dimer of dimers. It depends on Mg(2+) as a cofactor. K(+) serves as cofactor.

The protein resides in the cytoplasm. The enzyme catalyses L-methionine + ATP + H2O = S-adenosyl-L-methionine + phosphate + diphosphate. The protein operates within amino-acid biosynthesis; S-adenosyl-L-methionine biosynthesis; S-adenosyl-L-methionine from L-methionine: step 1/1. In terms of biological role, catalyzes the formation of S-adenosylmethionine (AdoMet) from methionine and ATP. The overall synthetic reaction is composed of two sequential steps, AdoMet formation and the subsequent tripolyphosphate hydrolysis which occurs prior to release of AdoMet from the enzyme. This Mycobacterium avium (strain 104) protein is S-adenosylmethionine synthase.